The following is a 29-amino-acid chain: Cytochrome b6-f complex subunit 8 (29 aa).

The chain crosses the membrane as a helical span at residues 3–23 (IVSLAWAALMVVFSFSLSLVV).

This sequence belongs to the PetN family. The 4 large subunits of the cytochrome b6-f complex are cytochrome b6, subunit IV (17 kDa polypeptide, PetD), cytochrome f and the Rieske protein, while the 4 small subunits are PetG, PetL, PetM and PetN. The complex functions as a dimer.

It localises to the plastid. The protein resides in the chloroplast thylakoid membrane. Its function is as follows. Component of the cytochrome b6-f complex, which mediates electron transfer between photosystem II (PSII) and photosystem I (PSI), cyclic electron flow around PSI, and state transitions. The chain is Cytochrome b6-f complex subunit 8 from Glycine max (Soybean).